Reading from the N-terminus, the 431-residue chain is uncharacterized protein (431 aa).

2 helical membrane passes run 42 to 62 and 74 to 94; these read LLIGMFGSVSLVNLLTIIGCL and VMIFTWNLVLSQFFSILATML. N105 carries an N-linked (GlcNAc...) asparagine; by host glycan. The next 5 membrane-spanning stretches (helical) occupy residues 111–131, 153–173, 202–222, 236–256, and 279–299; these read LVLFVDDVGLYSTALFFLFLI, AGVALYAVAFAWVLSIVAAVP, MWFLLGAPMIAVLANVVELAY, VCTFYVTCLMLFVPYYCFRVL, and ATRTLLTMRLGILPLFIIAFF.

The protein resides in the membrane. This is an uncharacterized protein from Homo sapiens (Human).